The sequence spans 1481 residues: Cystic fibrosis transmembrane conductance regulator (1481 aa).

Topologically, residues 1 to 77 (MQRSPLEKAS…KLINALRRCF (77 aa)) are cytoplasmic. The chain crosses the membrane as a helical span at residues 78 to 98 (FWRFMFYGIILYLGEVTKAVQ). One can recognise an ABC transmembrane type-1 1 domain in the interval 81–365 (FMFYGIILYL…WAVQTWYDSL (285 aa)). At 99–122 (PLLLGRIIASYDPDNKAERSIAIY) the chain is on the extracellular side. The chain crosses the membrane as a helical span at residues 123-146 (LGIGLCLLFIVRTLLLHPAIFGLH). Over 147–195 (HIGMQMRIAMFSLIYKKTLKLSSRVLDKISIGQLVSLLSNNLNKFDEGL) the chain is Cytoplasmic. The chain crosses the membrane as a helical span at residues 196–216 (ALAHFVWIAPLQVTLLMGLLW). Residues 217-222 (ELLQAF) are Extracellular-facing. Residues 223–243 (TFCGLAFLVVLAFLQAGLGKM) form a helical membrane-spanning segment. Topologically, residues 244–298 (MMKYRDQRAGKINERLVITSEIIENIQSVKAYCWEEAMEKIIENLRQTELKLTRK) are cytoplasmic. A helical transmembrane segment spans residues 299–319 (AAYVRYLNSSAFFFSGFFVVF). Topologically, residues 320–339 (LSVLPYALLKGIILRKIFTT) are extracellular. A helical transmembrane segment spans residues 340–358 (ISFCIVLRMAVTRQFPWAV). Over 359-858 (QTWYDSLGAI…YLRYITVHKS (500 aa)) the chain is Cytoplasmic. ATP contacts are provided by residues Trp-401, 457 to 464 (GSTGAGKT), and Gln-492. In terms of domain architecture, ABC transporter 1 spans 423-645 (NGDNNLFFSN…RPDFSSKLMG (223 aa)). Cys-523 carries S-palmitoyl cysteine lipidation. 2 positions are modified to phosphoserine: Ser-548 and Ser-659. The tract at residues 653 to 831 (TAERRNSIIT…EEINEEDLRD (179 aa)) is disordered R region. Position 669 is a phosphoserine; by PKA (Ser-669). A Phosphoserine modification is found at Ser-685. Residue Lys-687 forms a Glycyl lysine isopeptide (Lys-Gly) (interchain with G-Cter in ubiquitin) linkage. 2 positions are modified to phosphoserine: Ser-699 and Ser-711. At Thr-716 the chain carries Phosphothreonine. 5 positions are modified to phosphoserine: Ser-736, Ser-767, Ser-790, Ser-795, and Ser-813. Residues 859–879 (LMFVLIWCLVVFLAEVAASLV) form a helical membrane-spanning segment. The ABC transmembrane type-1 2 domain maps to 859–1155 (LMFVLIWCLV…AVNSSIDVDS (297 aa)). The Extracellular portion of the chain corresponds to 880–918 (VLCLFPKILFQDKGNSTKSANNSYAVIITSTSSYYIFYI). N-linked (GlcNAc...) asparagine glycosylation is found at Asn-894 and Asn-900. The chain crosses the membrane as a discontinuously helical span at residues 919–939 (YVGVADTLLALGLFRGLPLVH). At 940-990 (TLITVSKTLHHKMLQSVLQAPMSTLNTLKTGGILNRFSKDIAVLDDLLPLT) the chain is on the cytoplasmic side. The helical transmembrane segment at 991-1011 (IFDFVQLLLIVIGAVVVVSVL) threads the bilayer. The Extracellular portion of the chain corresponds to 1012 to 1013 (QP). A helical membrane pass occupies residues 1014-1034 (YIFLATVPVIAAFILLRAYFL). The Cytoplasmic portion of the chain corresponds to 1035–1095 (HTSQQLKQLE…TANWFLYLST (61 aa)). A helical transmembrane segment spans residues 1096 to 1116 (LRWFQMRIEMIFVIFFIAVTF). At 1117–1130 (ISILTTGEGEGRVG) the chain is on the extracellular side. The chain crosses the membrane as a helical span at residues 1131-1151 (IILTLAMNIMGTLQWAVNSSI). The Cytoplasmic portion of the chain corresponds to 1152-1481 (DVDSLMRSVS…TEEEVQETKI (330 aa)). Residues 1211–1444 (MTVKDLTAKY…KSLFRQAISP (234 aa)) form the ABC transporter 2 domain. ATP contacts are provided by residues Tyr-1220 and 1245–1252 (GRTGSGKS). Residues 1387-1481 (RTLKQAFADC…TEEEVQETKI (95 aa)) form an interaction with GORASP2 region. Cys-1396 carries S-palmitoyl cysteine lipidation. The interval 1452–1481 (PQRNSSRQKSRSNIAALKEETEEEVQETKI) is disordered. The span at 1453–1464 (QRNSSRQKSRSN) shows a compositional bias: low complexity. Ser-1457 bears the Phosphoserine mark. The span at 1471 to 1481 (ETEEEVQETKI) shows a compositional bias: acidic residues. The PDZ-binding motif lies at 1479–1481 (TKI).

Belongs to the ABC transporter superfamily. ABCC family. CFTR transporter (TC 3.A.1.202) subfamily. In terms of assembly, monomer; does not require oligomerization for channel activity. May form oligomers in the membrane. Interacts with SLC26A3, SLC26A6 and NHERF1. Interacts with SHANK2. Interacts with MYO6. Interacts (via C-terminus) with GOPC (via PDZ domain); this promotes CFTR internalization and thereby decreases channel activity. Interacts with SLC4A7 through NHERF1. Found in a complex with MYO5B and RAB11A. Interacts with ANO1. Interacts with SLC26A8. Interacts with AHCYL1; the interaction increases CFTR activity. Interacts with CSE1L. The core-glycosylated form interacts with GORASP2 (via PDZ GRASP-type 1 domain) in respone to ER stress. Interacts with MARCHF2; the interaction leads to CFTR ubiqtuitination and degradation. Interacts with ADGRG2. Post-translationally, N-glycosylated. Phosphorylated; cAMP treatment promotes phosphorylation and activates the channel. Dephosphorylation decreases the ATPase activity (in vitro). Phosphorylation at PKA sites activates the channel. Phosphorylation at PKC sites enhances the response to phosphorylation by PKA. Phosphorylated by AMPK; this inhibits channel activity. In terms of processing, ubiquitinated, leading to its degradation in the lysosome. Deubiquitination by USP10 in early endosomes enhances its endocytic recycling to the cell membrane. Ubiquitinated by RNF185 during ER stress. Ubiquitinated by MARCHF2.

The protein resides in the apical cell membrane. Its subcellular location is the early endosome membrane. It localises to the cell membrane. The protein localises to the recycling endosome membrane. It is found in the endoplasmic reticulum membrane. The protein resides in the nucleus. It catalyses the reaction ATP + H2O + closed Cl(-) channel = ADP + phosphate + open Cl(-) channel.. The enzyme catalyses chloride(in) = chloride(out). The catalysed reaction is hydrogencarbonate(in) = hydrogencarbonate(out). It carries out the reaction ATP + H2O = ADP + phosphate + H(+). Epithelial ion channel that plays an important role in the regulation of epithelial ion and water transport and fluid homeostasis. Mediates the transport of chloride ions across the cell membrane. Possesses an intrinsic ATPase activity and utilizes ATP to gate its channel; the passive flow of anions through the channel is gated by cycles of ATP binding and hydrolysis by the ATP-binding domains. The ion channel is also permeable to HCO(3)(-); selectivity depends on the extracellular chloride concentration. Exerts its function also by modulating the activity of other ion channels and transporters. Contributes to the regulation of the pH and the ion content of the epithelial fluid layer. Modulates the activity of the epithelial sodium channel (ENaC) complex, in part by regulating the cell surface expression of the ENaC complex. May regulate bicarbonate secretion and salvage in epithelial cells by regulating the transporter SLC4A7. Can inhibit the chloride channel activity of ANO1. Plays a role in the chloride and bicarbonate homeostasis during sperm epididymal maturation and capacitation. The chain is Cystic fibrosis transmembrane conductance regulator from Muntiacus reevesi (Reeves' muntjac).